Consider the following 434-residue polypeptide: Enolase (434 aa).

Substrate contacts are provided by histidine 158 and glutamate 167. Glutamate 210 (proton donor) is an active-site residue. The Mg(2+) site is built by aspartate 245, glutamate 294, and aspartate 319. Glutamate 294 and aspartate 319 together coordinate substrate. Lysine 344 (proton acceptor) is an active-site residue. Residues 371–374 (SHRS) and lysine 395 contribute to the substrate site.

It belongs to the enolase family. As to quaternary structure, homodimer. The cofactor is Mg(2+).

Its subcellular location is the cytoplasm. It catalyses the reaction (2R)-2-phosphoglycerate = phosphoenolpyruvate + H2O. It participates in carbohydrate degradation; glycolysis; pyruvate from D-glyceraldehyde 3-phosphate: step 4/5. The sequence is that of Enolase (ENO) from Schistosoma japonicum (Blood fluke).